The chain runs to 107 residues: Thioredoxin-1 (107 aa).

One can recognise a Thioredoxin domain in the interval A2 to K106. Residues C31 and C34 each act as nucleophile in the active site. C31 and C34 are disulfide-bonded.

This sequence belongs to the thioredoxin family. In terms of tissue distribution, ovary specific. Expressed present in the nurse cells from stage 9 of ovary development and is transported into the oocyte. Expressed throughout oogenesis.

It localises to the nucleus. Its function is as follows. Participates in various redox reactions through the reversible oxidation of its active center dithiol to a disulfide and catalyzes dithiol-disulfide exchange reactions. As a reducing substrate of peroxiredoxin 1, thioredoxin 2 is preferred over thioredoxin 1. Required for female meiosis and early embryonic development. This is Thioredoxin-1 (dhd) from Drosophila melanogaster (Fruit fly).